The sequence spans 505 residues: N-succinylglutamate 5-semialdehyde dehydrogenase (505 aa).

An NAD(+)-binding site is contributed by 234–239 (GSAHTG). Residues Glu-257 and Cys-291 contribute to the active site.

The protein belongs to the aldehyde dehydrogenase family. AstD subfamily.

It carries out the reaction N-succinyl-L-glutamate 5-semialdehyde + NAD(+) + H2O = N-succinyl-L-glutamate + NADH + 2 H(+). It participates in amino-acid degradation; L-arginine degradation via AST pathway; L-glutamate and succinate from L-arginine: step 4/5. Functionally, catalyzes the NAD-dependent reduction of succinylglutamate semialdehyde into succinylglutamate. The chain is N-succinylglutamate 5-semialdehyde dehydrogenase from Yersinia pestis (strain Pestoides F).